Consider the following 250-residue polypeptide: 2,3-bisphosphoglycerate-dependent phosphoglycerate mutase (250 aa).

Substrate is bound by residues 10-17 (RHGESQWN), 23-24 (TG), R62, 89-92 (ERHY), K100, 116-117 (RR), and 185-186 (GN). H11 (tele-phosphohistidine intermediate) is an active-site residue. The active-site Proton donor/acceptor is the E89.

The protein belongs to the phosphoglycerate mutase family. BPG-dependent PGAM subfamily. Homodimer.

The enzyme catalyses (2R)-2-phosphoglycerate = (2R)-3-phosphoglycerate. The protein operates within carbohydrate degradation; glycolysis; pyruvate from D-glyceraldehyde 3-phosphate: step 3/5. Functionally, catalyzes the interconversion of 2-phosphoglycerate and 3-phosphoglycerate. This is 2,3-bisphosphoglycerate-dependent phosphoglycerate mutase from Pectobacterium atrosepticum (strain SCRI 1043 / ATCC BAA-672) (Erwinia carotovora subsp. atroseptica).